Here is a 104-residue protein sequence, read N- to C-terminus: Large ribosomal subunit protein uL24 (104 aa).

This sequence belongs to the universal ribosomal protein uL24 family. As to quaternary structure, part of the 50S ribosomal subunit.

One of two assembly initiator proteins, it binds directly to the 5'-end of the 23S rRNA, where it nucleates assembly of the 50S subunit. Functionally, one of the proteins that surrounds the polypeptide exit tunnel on the outside of the subunit. In Flavobacterium johnsoniae (strain ATCC 17061 / DSM 2064 / JCM 8514 / BCRC 14874 / CCUG 350202 / NBRC 14942 / NCIMB 11054 / UW101) (Cytophaga johnsonae), this protein is Large ribosomal subunit protein uL24.